The primary structure comprises 165 residues: Large ribosomal subunit protein uL11 (165 aa).

Serine 38 is subject to Phosphoserine. Lysine 40 participates in a covalent cross-link: Glycyl lysine isopeptide (Lys-Gly) (interchain with G-Cter in SUMO2). Lysine 48 is covalently cross-linked (Glycyl lysine isopeptide (Lys-Gly) (interchain with G-Cter in ubiquitin)). Lysine 54 bears the N6-acetyllysine mark. Residue lysine 83 forms a Glycyl lysine isopeptide (Lys-Gly) (interchain with G-Cter in ubiquitin) linkage. At serine 165 the chain carries Phosphoserine.

The protein belongs to the universal ribosomal protein uL11 family. As to quaternary structure, component of the large ribosomal subunit. Mature ribosomes consist of a small (40S) and a large (60S) subunit. The 40S subunit contains about 33 different proteins and 1 molecule of RNA (18S). The 60S subunit contains about 49 different proteins and 3 molecules of RNA (28S, 5.8S and 5S). Ubiquitinated at Lys-48 and Lys-83 by RNF14 and RNF25 in response to ribosome collisions (ribosome stalling).

The protein resides in the cytoplasm. In terms of biological role, component of the large ribosomal subunit. The ribosome is a large ribonucleoprotein complex responsible for the synthesis of proteins in the cell. Binds directly to 26S ribosomal RNA. This is Large ribosomal subunit protein uL11 (Rpl12) from Rattus norvegicus (Rat).